A 475-amino-acid polypeptide reads, in one-letter code: Bifunctional protein HldE (475 aa).

The tract at residues 1–317 (MQYSAQFNRA…ENAIHGRTTA (317 aa)) is ribokinase. Residue 194–197 (NMSE) participates in ATP binding. Residue Asp263 is part of the active site. The segment at 343–475 (MTNGCFDILH…VIKKIQQLKE (133 aa)) is cytidylyltransferase.

In the N-terminal section; belongs to the carbohydrate kinase PfkB family. The protein in the C-terminal section; belongs to the cytidylyltransferase family. Homodimer.

It carries out the reaction D-glycero-beta-D-manno-heptose 7-phosphate + ATP = D-glycero-beta-D-manno-heptose 1,7-bisphosphate + ADP + H(+). The enzyme catalyses D-glycero-beta-D-manno-heptose 1-phosphate + ATP + H(+) = ADP-D-glycero-beta-D-manno-heptose + diphosphate. It participates in nucleotide-sugar biosynthesis; ADP-L-glycero-beta-D-manno-heptose biosynthesis; ADP-L-glycero-beta-D-manno-heptose from D-glycero-beta-D-manno-heptose 7-phosphate: step 1/4. It functions in the pathway nucleotide-sugar biosynthesis; ADP-L-glycero-beta-D-manno-heptose biosynthesis; ADP-L-glycero-beta-D-manno-heptose from D-glycero-beta-D-manno-heptose 7-phosphate: step 3/4. Functionally, catalyzes the phosphorylation of D-glycero-D-manno-heptose 7-phosphate at the C-1 position to selectively form D-glycero-beta-D-manno-heptose-1,7-bisphosphate. In terms of biological role, catalyzes the ADP transfer from ATP to D-glycero-beta-D-manno-heptose 1-phosphate, yielding ADP-D-glycero-beta-D-manno-heptose. The chain is Bifunctional protein HldE from Histophilus somni (strain 129Pt) (Haemophilus somnus).